Here is a 456-residue protein sequence, read N- to C-terminus: Phospholipase A1 member A (456 aa).

The first 25 residues, 1-25, serve as a signal peptide directing secretion; sequence MPPGPWESCFWVGGLILWLSVGSSG. Residue Asn-79 is glycosylated (N-linked (GlcNAc...) asparagine). The active-site Nucleophile is the Ser-166. Residue Asp-190 is the Charge relay system of the active site. A disulfide bond links Cys-245 and Cys-258. The Charge relay system role is filled by His-260. 2 disulfides stabilise this stretch: Cys-282–Cys-293 and Cys-296–Cys-304. The N-linked (GlcNAc...) asparagine glycan is linked to Asn-365. The segment at 374–456 is involved in the recognition of diacyl-phospholipids; that stretch reads IPKQQRYGKG…VSCDLKIACV (83 aa).

The protein belongs to the AB hydrolase superfamily. Lipase family. As to expression, widely expressed. Expressed in placenta, prostate and liver. Weakly or not expressed in skin, leukocytes, platelets, colon, spleen, lung, muscle and kidney.

The protein localises to the secreted. It carries out the reaction a 1,2-diacyl-sn-glycero-3-phospho-L-serine + H2O = a 2-acyl-sn-glycero-3-phospho-L-serine + a fatty acid + H(+). The catalysed reaction is 1,2-di-(9Z)-octadecenoyl-sn-glycero-3-phospho-L-serine + H2O = 2-(9Z-octadecenoyl)-sn-glycero-3-phospho-L-serine + (9Z)-octadecenoate + H(+). The enzyme catalyses 1-hexadecanoyl-2-(5Z,8Z,11Z,14Z-eicosatetraenoyl)-sn-glycero-3-phospho-L-serine + H2O = 2-(5Z,8Z,11Z,14Z)-eicosatetraenoyl-sn-glycero-3-phospho-L-serine + hexadecanoate + H(+). It catalyses the reaction a 1-acyl-sn-glycero-3-phospho-L-serine + H2O = sn-glycero-3-phospho-L-serine + a fatty acid + H(+). It carries out the reaction 1-(9Z-octadecenoyl)-sn-glycero-3-phospho-L-serine + H2O = sn-glycero-3-phospho-L-serine + (9Z)-octadecenoate + H(+). Its function is as follows. Hydrolyzes the ester bond of the acyl group attached at the sn-1 position of phosphatidylserines (phospholipase A1 activity) and 1-acyl-2-lysophosphatidylserines (lysophospholipase activity) in the pathway of phosphatidylserines acyl chain remodeling. Cleaves phosphatidylserines exposed on the outer leaflet of the plasma membrane of apoptotic cells producing 2-acyl-1-lysophosphatidylserines, which in turn enhance mast cell activation and histamine production. Has no activity toward other glycerophospholipids including phosphatidylcholines, phosphatidylethanolamines, phosphatidic acids or phosphatidylinositols, or glycerolipids such as triolein. In terms of biological role, hydrolyzes lyso-PS but not PS. This is Phospholipase A1 member A from Homo sapiens (Human).